The primary structure comprises 188 residues: Nicotinamide-nucleotide adenylyltransferase (188 aa).

It belongs to the archaeal NMN adenylyltransferase family.

It localises to the cytoplasm. It catalyses the reaction beta-nicotinamide D-ribonucleotide + ATP + H(+) = diphosphate + NAD(+). It participates in cofactor biosynthesis; NAD(+) biosynthesis; NAD(+) from nicotinamide D-ribonucleotide: step 1/1. The sequence is that of Nicotinamide-nucleotide adenylyltransferase from Pyrococcus furiosus (strain ATCC 43587 / DSM 3638 / JCM 8422 / Vc1).